Consider the following 156-residue polypeptide: Small ribosomal subunit protein uS7 (156 aa).

Belongs to the universal ribosomal protein uS7 family. In terms of assembly, part of the 30S ribosomal subunit. Contacts proteins S9 and S11.

In terms of biological role, one of the primary rRNA binding proteins, it binds directly to 16S rRNA where it nucleates assembly of the head domain of the 30S subunit. Is located at the subunit interface close to the decoding center, probably blocks exit of the E-site tRNA. This Polynucleobacter necessarius subsp. necessarius (strain STIR1) protein is Small ribosomal subunit protein uS7.